The following is a 126-amino-acid chain: 13 kDa ribonucleoprotein-associated protein (126 aa).

The protein belongs to the eukaryotic ribosomal protein eL8 family. As to quaternary structure, component of the U3 snoRNP particle. Binds to the C'/D and B/C motifs in U3 snoRNA. Component of the 25S U4/U6.U5 tri-snRNP particle, a subcomplex of the spliceosome. Binds to the 5' stem-loop of U4 snRNA.

The protein localises to the nucleus. It localises to the nucleolus. In terms of biological role, common component of the spliceosome and rRNA processing machinery. In association with the spliceosomal U4/U6.U5 tri-snRNP particle, required for splicing of pre-mRNA. In association with box C/D snoRNPs, required for processing of pre-ribosomal RNA (rRNA) and site-specific 2'-O-methylation of substrate RNAs. Essential for the accumulation and stability of U4 snRNA, U6 snRNA, and box C/D snoRNAs. The sequence is that of 13 kDa ribonucleoprotein-associated protein (SNU13) from Candida glabrata (strain ATCC 2001 / BCRC 20586 / JCM 3761 / NBRC 0622 / NRRL Y-65 / CBS 138) (Yeast).